The chain runs to 123 residues: Small ribosomal subunit protein uS12c (123 aa).

Belongs to the universal ribosomal protein uS12 family. As to quaternary structure, part of the 30S ribosomal subunit.

Its subcellular location is the plastid. The protein localises to the chloroplast. With S4 and S5 plays an important role in translational accuracy. Located at the interface of the 30S and 50S subunits. The polypeptide is Small ribosomal subunit protein uS12c (rps12) (Chaetosphaeridium globosum (Charophycean green alga)).